The following is a 150-amino-acid chain: Large ribosomal subunit protein bL9 (150 aa).

It belongs to the bacterial ribosomal protein bL9 family.

Its function is as follows. Binds to the 23S rRNA. The polypeptide is Large ribosomal subunit protein bL9 (Neisseria meningitidis serogroup A / serotype 4A (strain DSM 15465 / Z2491)).